Consider the following 291-residue polypeptide: 4-diphosphocytidyl-2-C-methyl-D-erythritol kinase (291 aa).

The active site involves lysine 12. 95–105 provides a ligand contact to ATP; that stretch reads PDGGGLGGGSS. Aspartate 137 is a catalytic residue.

Belongs to the GHMP kinase family. IspE subfamily.

The enzyme catalyses 4-CDP-2-C-methyl-D-erythritol + ATP = 4-CDP-2-C-methyl-D-erythritol 2-phosphate + ADP + H(+). Its pathway is isoprenoid biosynthesis; isopentenyl diphosphate biosynthesis via DXP pathway; isopentenyl diphosphate from 1-deoxy-D-xylulose 5-phosphate: step 3/6. Catalyzes the phosphorylation of the position 2 hydroxy group of 4-diphosphocytidyl-2C-methyl-D-erythritol. The sequence is that of 4-diphosphocytidyl-2-C-methyl-D-erythritol kinase from Alkalilimnicola ehrlichii (strain ATCC BAA-1101 / DSM 17681 / MLHE-1).